A 363-amino-acid polypeptide reads, in one-letter code: tRNA N6-adenosine threonylcarbamoyltransferase (363 aa).

H121 and H125 together coordinate Fe cation. Substrate is bound by residues 143-147 (LASGG), D176, G189, and N287. D315 is a Fe cation binding site.

It belongs to the KAE1 / TsaD family. Requires Fe(2+) as cofactor.

The protein resides in the cytoplasm. It catalyses the reaction L-threonylcarbamoyladenylate + adenosine(37) in tRNA = N(6)-L-threonylcarbamoyladenosine(37) in tRNA + AMP + H(+). Its function is as follows. Required for the formation of a threonylcarbamoyl group on adenosine at position 37 (t(6)A37) in tRNAs that read codons beginning with adenine. Is involved in the transfer of the threonylcarbamoyl moiety of threonylcarbamoyl-AMP (TC-AMP) to the N6 group of A37, together with TsaE and TsaB. TsaD likely plays a direct catalytic role in this reaction. This chain is tRNA N6-adenosine threonylcarbamoyltransferase, found in Rhodopseudomonas palustris (strain BisA53).